The following is a 446-amino-acid chain: COBRA-like protein 1 (446 aa).

Residues 1–28 form the signal peptide; that stretch reads MALLLLRMGVSVALLVAFFSSLIPSSEA. Asparagine 37, asparagine 162, asparagine 170, asparagine 209, asparagine 234, asparagine 316, asparagine 331, asparagine 350, and asparagine 419 each carry an N-linked (GlcNAc...) asparagine glycan. Alanine 420 is lipidated: GPI-anchor amidated alanine. A propeptide spans 421-446 (removed in mature form); the sequence is STRVMSSILLPFITIWTALTFLMVYA.

This sequence belongs to the COBRA family.

It is found in the cell membrane. Its function is as follows. Involved in determining the orientation of cell expansion, probably by playing an important role in cellulose deposition. May act by recruiting cellulose synthesizing complexes to discrete positions on the cell surface. The polypeptide is COBRA-like protein 1 (BC1L6) (Oryza sativa subsp. japonica (Rice)).